The sequence spans 359 residues: CMP-N-acetylneuraminate-poly-alpha-2,8-sialyltransferase (359 aa).

Residues 1–7 (MRSIRKR) are Cytoplasmic-facing. Residues 8 to 20 (WTICTISLLLIFY) form a helical; Signal-anchor for type II membrane protein membrane-spanning segment. Residues 21–359 (KTKEMARTEE…KLTTGKCIKQ (339 aa)) lie on the Lumenal side of the membrane. N-linked (GlcNAc...) asparagine glycosylation is found at N50, N74, and N119. 2 disulfide bridges follow: C142–C292 and C156–C356. N147 and N170 together coordinate CMP-N-acetyl-beta-neuraminate. Residues N204 and N219 are each glycosylated (N-linked (GlcNAc...) asparagine). CMP-N-acetyl-beta-neuraminate is bound by residues S279, T280, G281, and W301. The active-site Proton donor/acceptor is H331.

The protein belongs to the glycosyltransferase 29 family. Autopolysialylated.

It is found in the golgi apparatus membrane. The protein resides in the secreted. The catalysed reaction is [N-acetyl-alpha-D-neuraminosyl-(2-&gt;8)](n) + CMP-N-acetyl-beta-neuraminate = [N-acetyl-alpha-D-neuraminosyl-(2-&gt;8)](n+1) + CMP + H(+). Functionally, catalyzes the transfer of a sialic acid from a CMP-linked sialic acid donor onto a terminal alpha-2,3-, alpha-2,6-, or alpha-2,8-linked sialic acid of an N-linked glycan protein acceptor through alpha-2,8-linkages. Therefore, participates in polysialic acid synthesis on various sialylated N-acetyllactosaminyl oligosaccharides, including NCAM1 N-glycans, FETUB N-glycans and AHSG. It is noteworthy that alpha-2,3-linked sialic acid is apparently a better acceptor than alpha-2,6-linked sialic acid. This chain is CMP-N-acetylneuraminate-poly-alpha-2,8-sialyltransferase (ST8SIA4), found in Bos taurus (Bovine).